A 1114-amino-acid polypeptide reads, in one-letter code: Transcriptional repressor NF-X1 (1114 aa).

Residues 9 to 26 are interaction with PABPC1 and PABC4; that stretch reads GTFKFNTDAAEFIPQERK. Disordered stretches follow at residues 20–220, 232–287, and 299–325; these read FIPQ…CRKP, QRRY…PTKS, and KSSR…FPRG. Serine 50, serine 81, serine 92, serine 126, serine 130, and serine 147 each carry phosphoserine. Polar residues-rich tracts occupy residues 72–103 and 121–142; these read SYAS…NQPW and LSEQ…SGTN. Basic and acidic residues-rich tracts occupy residues 143 to 156, 185 to 202, 232 to 248, and 304 to 315; these read PREH…KEVV, LRSE…DENT, QRRY…EGAR, and VNQEKTAVRRQD. Serine 320 is modified (phosphoserine). The RING-type; atypical zinc-finger motif lies at 352 to 403; the sequence is CMVCCELVQVTAPVWSCQSCFHVFHLNCIKKWARSPASHADGQSGWRCPACQ. 8 NF-X1-type zinc fingers span residues 447-465, 500-519, 561-580, 626-649, 688-707, 715-734, 826-848, and 857-878; these read CPHS…PCPA, CGQH…PCRI, CGSH…PCPR, CGSS…PCSR, CGRH…KCPL, CGLH…TCWQ, CGMH…ACKQ, and CGHP…ACKA. One can recognise an R3H domain in the interval 988–1056; the sequence is LKFVSDVEKE…KRNVVVTAVR (69 aa). Positions 1071-1095 are disordered; it reads ERETQTRPPPPIPHHRHQADKAPGS.

The protein belongs to the NFX1 family. In terms of assembly, interacts with PABPC1 and PABPC4. In terms of tissue distribution, ubiquitously expressed, with highest levels in thymus.

The protein resides in the nucleus. In terms of biological role, binds to the X-box motif of MHC class II genes and represses their expression. May play an important role in regulating the duration of an inflammatory response by limiting the period in which MHC class II molecules are induced by interferon-gamma. Together with PABPC1 or PABPC4, acts as a coactivator for TERT expression. Mediates E2-dependent ubiquitination. The chain is Transcriptional repressor NF-X1 (Nfx1) from Mus musculus (Mouse).